Here is a 312-residue protein sequence, read N- to C-terminus: Malate dehydrogenase (312 aa).

NAD(+) contacts are provided by residues 7–12 (GAGNVG) and Asp-32. Residues Arg-82 and Arg-88 each coordinate substrate. NAD(+) contacts are provided by residues Asn-95 and 118 to 120 (VSN). Substrate-binding residues include Asn-120 and Arg-151. The Proton acceptor role is filled by His-175.

It belongs to the LDH/MDH superfamily. MDH type 3 family.

It carries out the reaction (S)-malate + NAD(+) = oxaloacetate + NADH + H(+). Catalyzes the reversible oxidation of malate to oxaloacetate. This Cytophaga hutchinsonii (strain ATCC 33406 / DSM 1761 / CIP 103989 / NBRC 15051 / NCIMB 9469 / D465) protein is Malate dehydrogenase.